Consider the following 341-residue polypeptide: Gibberellin 2-beta-dioxygenase 5 (341 aa).

Positions 187 to 290 (REETCFLRLN…RFSMAFFLCP (104 aa)) constitute a Fe2OG dioxygenase domain. Tyr198 contacts 2-oxoglutarate. The Fe cation site is built by His213, Asp215, and His271. 2 residues coordinate 2-oxoglutarate: Arg281 and Ser283.

It belongs to the iron/ascorbate-dependent oxidoreductase family. GA2OX subfamily. It depends on L-ascorbate as a cofactor. The cofactor is Fe(2+). Expressed in roots, leaves, culms, leaf sheaths and young panicles.

The protein localises to the cytoplasm. Its subcellular location is the nucleus. The enzyme catalyses gibberellin A1 + 2-oxoglutarate + O2 = gibberellin A8 + succinate + CO2. It participates in plant hormone biosynthesis; gibberellin biosynthesis. In terms of biological role, catalyzes the 2-beta-hydroxylation of several biologically active gibberellins (GAs), leading to the homeostatic regulation of their endogenous level. Catabolism of GAs plays a central role in plant development. In vitro, converts GA12 and GA53 to the corresponding 2-beta-hydroxylated products GA110 and GA97, respectively. The protein is Gibberellin 2-beta-dioxygenase 5 of Oryza sativa subsp. japonica (Rice).